Reading from the N-terminus, the 499-residue chain is Citrinin biosynthesis cluster MFS transporter mrr1 (499 aa).

The segment at Met1–Lys29 is disordered. Transmembrane regions (helical) follow at residues Ser58–Phe78, Val95–Gly115, Leu124–Ala144, Phe155–Phe175, Leu187–Val207, Trp215–Leu235, Ile291–Val311, and Gly327–Val347. An N-linked (GlcNAc...) asparagine glycan is attached at Asn361. The next 4 helical transmembrane spans lie at Leu370–Thr390, Ile395–Trp415, Ala443–Trp463, and Leu467–Ala487.

The protein belongs to the major facilitator superfamily. CAR1 family.

Its subcellular location is the membrane. Functionally, MFS transporter; part of the gene cluster that mediates the biosynthesis the mycotoxin citrinin, a hepato-nephrotoxic compound to humans due to inhibition of respiration complex III. The sequence is that of Citrinin biosynthesis cluster MFS transporter mrr1 from Monascus ruber (Mold).